Reading from the N-terminus, the 180-residue chain is Protein SPO16 homolog (180 aa).

In terms of assembly, homooligomer. Interacts with SHOC, SYCP1 and SYCE3.

The protein resides in the chromosome. Plays a key role in reinforcing the integrity of the central element of the synaptonemal complex (SC) thereby stabilizing SC, ensuring progression of meiotic prophase I in male and female germ cells. Promotes homologous recombination and crossing-over in meiotic prophase I via its association with SHOC1. Required for the localization of TEX11 and MSH4 to recombination intermediates. The sequence is that of Protein SPO16 homolog from Homo sapiens (Human).